Here is a 618-residue protein sequence, read N- to C-terminus: 1-deoxy-D-xylulose-5-phosphate synthase (618 aa).

Thiamine diphosphate is bound by residues His-74 and 115–117 (GHS). Asp-146 serves as a coordination point for Mg(2+). Thiamine diphosphate-binding positions include 147–148 (GA), Asn-175, Tyr-286, and Glu-366. Residue Asn-175 coordinates Mg(2+).

Belongs to the transketolase family. DXPS subfamily. Homodimer. The cofactor is Mg(2+). It depends on thiamine diphosphate as a cofactor.

It carries out the reaction D-glyceraldehyde 3-phosphate + pyruvate + H(+) = 1-deoxy-D-xylulose 5-phosphate + CO2. Its pathway is metabolic intermediate biosynthesis; 1-deoxy-D-xylulose 5-phosphate biosynthesis; 1-deoxy-D-xylulose 5-phosphate from D-glyceraldehyde 3-phosphate and pyruvate: step 1/1. In terms of biological role, catalyzes the acyloin condensation reaction between C atoms 2 and 3 of pyruvate and glyceraldehyde 3-phosphate to yield 1-deoxy-D-xylulose-5-phosphate (DXP). This is 1-deoxy-D-xylulose-5-phosphate synthase from Clostridium tetani (strain Massachusetts / E88).